Reading from the N-terminus, the 284-residue chain is 2-dehydro-3-deoxyphosphooctonate aldolase (284 aa).

Belongs to the KdsA family.

It localises to the cytoplasm. It catalyses the reaction D-arabinose 5-phosphate + phosphoenolpyruvate + H2O = 3-deoxy-alpha-D-manno-2-octulosonate-8-phosphate + phosphate. The protein operates within carbohydrate biosynthesis; 3-deoxy-D-manno-octulosonate biosynthesis; 3-deoxy-D-manno-octulosonate from D-ribulose 5-phosphate: step 2/3. It functions in the pathway bacterial outer membrane biogenesis; lipopolysaccharide biosynthesis. The sequence is that of 2-dehydro-3-deoxyphosphooctonate aldolase from Escherichia coli O157:H7.